The chain runs to 155 residues: uncharacterized protein (155 aa).

A mitochondrion-targeting transit peptide spans 1 to 17; the sequence is MMRGASKRSISSAAVLL. The tract at residues 111 to 155 is disordered; sequence WHRQQKRSQRRRSVAKYEQREEAARVEKEEREARDREMVRELFRR. Over residues 113-124 the composition is skewed to basic residues; it reads RQQKRSQRRRSV. Basic and acidic residues predominate over residues 125 to 155; sequence AKYEQREEAARVEKEEREARDREMVRELFRR.

It belongs to the prokaryotic/mitochondrial release factor family.

Its subcellular location is the mitochondrion. This is an uncharacterized protein from Saccharomyces cerevisiae (strain ATCC 204508 / S288c) (Baker's yeast).